The following is a 175-amino-acid chain: Type-2 ice-structuring protein (175 aa).

The signal sequence occupies residues 1-16 (MLAALLVCAMVALTRA). Positions 17 to 33 (ANGDTGKEAVMTGSSGK) are excised as a propeptide. The region spanning 36–163 (TECPTDWKMF…LHASVCAKPA (128 aa)) is the C-type lectin domain. 5 cysteine pairs are disulfide-bonded: Cys-38/Cys-49, Cys-66/Cys-159, Cys-103/Cys-134, Cys-123/Cys-145, and Cys-135/Cys-151.

Its subcellular location is the secreted. Its function is as follows. Antifreeze proteins lower the blood freezing point. The chain is Type-2 ice-structuring protein from Osmerus mordax (Rainbow smelt).